Consider the following 337-residue polypeptide: Glucokinase (337 aa).

Residue 11–16 (ADIGGT) participates in ATP binding.

The protein belongs to the bacterial glucokinase family.

Its subcellular location is the cytoplasm. It catalyses the reaction D-glucose + ATP = D-glucose 6-phosphate + ADP + H(+). The chain is Glucokinase from Xylella fastidiosa (strain M12).